Here is a 554-residue protein sequence, read N- to C-terminus: uncharacterized protein (554 aa).

An N-terminal signal peptide occupies residues 1-33 (MKKILIIILFIIIFIVLIYSGLWFVIMFSLSHS).

This is an uncharacterized protein from Rickettsia prowazekii (strain Madrid E).